A 164-amino-acid chain; its full sequence is Xanthine-guanine phosphoribosyltransferase (164 aa).

5-phospho-alpha-D-ribose 1-diphosphate-binding positions include 41-42 (RG) and 98-106 (DDLTDTGKT). Aspartate 99 contributes to the Mg(2+) binding site. Positions 102 and 145 each coordinate guanine. Residues aspartate 102 and isoleucine 145 each contribute to the xanthine site. GMP-binding positions include 102–106 (DTGKT) and 144–145 (WI).

The protein belongs to the purine/pyrimidine phosphoribosyltransferase family. XGPT subfamily. Homotetramer. Mg(2+) serves as cofactor.

It localises to the cell inner membrane. It carries out the reaction GMP + diphosphate = guanine + 5-phospho-alpha-D-ribose 1-diphosphate. The enzyme catalyses XMP + diphosphate = xanthine + 5-phospho-alpha-D-ribose 1-diphosphate. The catalysed reaction is IMP + diphosphate = hypoxanthine + 5-phospho-alpha-D-ribose 1-diphosphate. The protein operates within purine metabolism; GMP biosynthesis via salvage pathway; GMP from guanine: step 1/1. It participates in purine metabolism; XMP biosynthesis via salvage pathway; XMP from xanthine: step 1/1. Its function is as follows. Purine salvage pathway enzyme that catalyzes the transfer of the ribosyl-5-phosphate group from 5-phospho-alpha-D-ribose 1-diphosphate (PRPP) to the N9 position of the 6-oxopurines guanine and xanthine to form the corresponding ribonucleotides GMP (guanosine 5'-monophosphate) and XMP (xanthosine 5'-monophosphate), with the release of PPi. To a lesser extent, also acts on hypoxanthine. The chain is Xanthine-guanine phosphoribosyltransferase from Rhizobium johnstonii (strain DSM 114642 / LMG 32736 / 3841) (Rhizobium leguminosarum bv. viciae).